We begin with the raw amino-acid sequence, 159 residues long: Small ribosomal subunit protein uS7 (159 aa).

The protein belongs to the universal ribosomal protein uS7 family. Part of the 30S ribosomal subunit. Contacts proteins S9 and S11.

One of the primary rRNA binding proteins, it binds directly to 16S rRNA where it nucleates assembly of the head domain of the 30S subunit. Is located at the subunit interface close to the decoding center, probably blocks exit of the E-site tRNA. The protein is Small ribosomal subunit protein uS7 of Endomicrobium trichonymphae.